Consider the following 189-residue polypeptide: 6,7-dimethyl-8-ribityllumazine synthase (189 aa).

5-amino-6-(D-ribitylamino)uracil is bound by residues W31, S65–E67, and C89–I91. Residue E94 to T95 participates in (2S)-2-hydroxy-3-oxobutyl phosphate binding. H97 functions as the Proton donor in the catalytic mechanism. Residue F122 participates in 5-amino-6-(D-ribitylamino)uracil binding. R136 contacts (2S)-2-hydroxy-3-oxobutyl phosphate.

It belongs to the DMRL synthase family.

It catalyses the reaction (2S)-2-hydroxy-3-oxobutyl phosphate + 5-amino-6-(D-ribitylamino)uracil = 6,7-dimethyl-8-(1-D-ribityl)lumazine + phosphate + 2 H2O + H(+). Its pathway is cofactor biosynthesis; riboflavin biosynthesis; riboflavin from 2-hydroxy-3-oxobutyl phosphate and 5-amino-6-(D-ribitylamino)uracil: step 1/2. Catalyzes the formation of 6,7-dimethyl-8-ribityllumazine by condensation of 5-amino-6-(D-ribitylamino)uracil with 3,4-dihydroxy-2-butanone 4-phosphate. This is the penultimate step in the biosynthesis of riboflavin. In Flavobacterium psychrophilum (strain ATCC 49511 / DSM 21280 / CIP 103535 / JIP02/86), this protein is 6,7-dimethyl-8-ribityllumazine synthase.